We begin with the raw amino-acid sequence, 1603 residues long: Vitellogenin-4 (1603 aa).

The N-terminal stretch at 1 to 15 (MKSIIIASLVALAIA) is a signal peptide. The 662-residue stretch at 24 to 685 (FSPKSEYVYK…EKNAFLPKEV (662 aa)) folds into the Vitellogenin domain. Asparagine 1266 carries N-linked (GlcNAc...) asparagine glycosylation. A VWFD domain is found at 1306 to 1475 (ATCKVDQSEV…SYLLKNEECE (170 aa)). Cystine bridges form between cysteine 1308–cysteine 1438 and cysteine 1330–cysteine 1474.

Expressed in the intestine of adult hermaphrodites.

The protein localises to the secreted. Precursor of the egg-yolk proteins that are sources of nutrients during embryonic development. Together with other vitellogenins, may play a role in modulating life-span, acting via induction of autophagy and lysosomal lipolysis. The chain is Vitellogenin-4 (vit-4) from Caenorhabditis elegans.